Reading from the N-terminus, the 89-residue chain is Small ribosomal subunit protein uS19 (89 aa).

Belongs to the universal ribosomal protein uS19 family.

In terms of biological role, protein S19 forms a complex with S13 that binds strongly to the 16S ribosomal RNA. This Rhodopirellula baltica (strain DSM 10527 / NCIMB 13988 / SH1) protein is Small ribosomal subunit protein uS19.